The primary structure comprises 281 residues: MYIFFPKLNPIIFTIGPVSARWYGFMYVISFLFAMWYGKKCSIKNKKIWYEKKIETLLYSIFLGSCIGGRIGYIIFYNFSYYSQNMLSVFYIWEGGMSFHGGLIGAIIVMSYFSFKYKKKILEISDFITPLIPFGLGAGRIGNFINSELWGRVSPNFSYAMIFPNSQNQDLKEIKKYPELQLLSDQYGALPRHPTQLYEFFLEGILLFFIIYFFSKKDRPTGSISGLFLIFYGLFRIFIEFFREPDPQIGLLKNIITMGQILSLPMIIAGLIIMYKSCYKK.

Helical transmembrane passes span isoleucine 11–phenylalanine 31, leucine 57–tyrosine 77, valine 89–valine 109, isoleucine 121–isoleucine 141, proline 194–phenylalanine 214, glycine 222–phenylalanine 242, and isoleucine 255–tyrosine 275. Residue arginine 140 coordinates a 1,2-diacyl-sn-glycero-3-phospho-(1'-sn-glycerol).

Belongs to the Lgt family.

It localises to the cell inner membrane. The enzyme catalyses L-cysteinyl-[prolipoprotein] + a 1,2-diacyl-sn-glycero-3-phospho-(1'-sn-glycerol) = an S-1,2-diacyl-sn-glyceryl-L-cysteinyl-[prolipoprotein] + sn-glycerol 1-phosphate + H(+). It participates in protein modification; lipoprotein biosynthesis (diacylglyceryl transfer). In terms of biological role, catalyzes the transfer of the diacylglyceryl group from phosphatidylglycerol to the sulfhydryl group of the N-terminal cysteine of a prolipoprotein, the first step in the formation of mature lipoproteins. This is Phosphatidylglycerol--prolipoprotein diacylglyceryl transferase from Buchnera aphidicola subsp. Acyrthosiphon pisum (strain 5A).